A 151-amino-acid polypeptide reads, in one-letter code: NADH dehydrogenase [ubiquinone] 1 beta subcomplex subunit 11, mitochondrial (151 aa).

The transit peptide at 1–29 (MAARLLSLYGRCLSAAGAMRGLPAARVRW) directs the protein to the mitochondrion. The segment at 40–62 (GVEKKRQREPTMQWQEDPEPEDE) is disordered. A helical transmembrane segment spans residues 87-107 (AVFFFGFSIVLVFGTTFVAYV).

This sequence belongs to the complex I NDUFB11 subunit family. As to quaternary structure, complex I is composed of 45 different subunits. Interacts with BCAP31.

The protein localises to the mitochondrion inner membrane. Accessory subunit of the mitochondrial membrane respiratory chain NADH dehydrogenase (Complex I), that is believed not to be involved in catalysis. Complex I functions in the transfer of electrons from NADH to the respiratory chain. The immediate electron acceptor for the enzyme is believed to be ubiquinone. The sequence is that of NADH dehydrogenase [ubiquinone] 1 beta subcomplex subunit 11, mitochondrial (Ndufb11) from Mus musculus (Mouse).